Consider the following 493-residue polypeptide: Ectonucleotide pyrophosphatase/phosphodiesterase 2 (493 aa).

Residues 1-28 (MLLFEQPVDLEKNNEDDTNIKPFAISRH) lie on the Cytoplasmic side of the membrane. A helical; Signal-anchor for type II membrane protein transmembrane segment spans residues 29-45 (FLLKLLLCGIILIELLL). The Extracellular portion of the chain corresponds to 46-493 (YSKCPKPIDN…KTKKEKSLLQ (448 aa)). Residues Asn62, Asn69, and Asn112 are each glycosylated (N-linked (GlcNAc...) asparagine). The interval 76-438 (TLTILISIDG…IGIMGTHGYN (363 aa)) is phosphodiesterase. Thr127 acts as the Nucleophile in catalysis. N-linked (GlcNAc...) asparagine glycans are attached at residues Asn153 and Asn441.

It belongs to the nucleotide pyrophosphatase/phosphodiesterase family. In terms of processing, autophosphorylated as part of the catalytic cycle of phosphodiesterase/pyrophosphatase activity.

It localises to the membrane. The catalysed reaction is Hydrolytically removes 5'-nucleotides successively from the 3'-hydroxy termini of 3'-hydroxy-terminated oligonucleotides.. It carries out the reaction a ribonucleoside 5'-triphosphate + H2O = a ribonucleoside 5'-phosphate + diphosphate + H(+). The enzyme catalyses a 2'-deoxyribonucleoside 5'-triphosphate + H2O = a 2'-deoxyribonucleoside 5'-phosphate + diphosphate + H(+). Its function is as follows. Mediates extracellular nucleotide derived phosphate hydrolysis along with NPP1 and PHO5. The polypeptide is Ectonucleotide pyrophosphatase/phosphodiesterase 2 (NPP2) (Saccharomyces cerevisiae (strain ATCC 204508 / S288c) (Baker's yeast)).